A 115-amino-acid chain; its full sequence is Ribosomal protein uS4-like (115 aa).

The protein belongs to the universal ribosomal protein uS4 family.

The chain is Ribosomal protein uS4-like from Azoarcus sp. (strain BH72).